The sequence spans 159 residues: MEQSRQNLQSQFFIEHILQILPHRYPMLLVDRIIELQANQKIVAYKNITFNEDVFNGHFPNKPIFPGVLIVEGMAQSGGFLAFTSLWGFDPEIAKTKIVYFMTIDKVKFRIPVTPGDRLEYHLEVLKHKGMIWQVGGTAQVDGKVVAEAELKAMIAERE.

Residue His-58 is part of the active site.

This sequence belongs to the thioester dehydratase family. FabZ subfamily.

It localises to the cytoplasm. It carries out the reaction a (3R)-hydroxyacyl-[ACP] = a (2E)-enoyl-[ACP] + H2O. Involved in unsaturated fatty acids biosynthesis. Catalyzes the dehydration of short chain beta-hydroxyacyl-ACPs and long chain saturated and unsaturated beta-hydroxyacyl-ACPs. This Helicobacter pylori (strain P12) protein is 3-hydroxyacyl-[acyl-carrier-protein] dehydratase FabZ.